We begin with the raw amino-acid sequence, 638 residues long: Chaperone protein DnaK (638 aa).

Position 199 is a phosphothreonine; by autocatalysis (Thr-199). Residues 600–638 (EINQKKSEENLKKEDTSSESKKDENVVDAEFEEIKDPKK) form a disordered region. The span at 602 to 624 (NQKKSEENLKKEDTSSESKKDEN) shows a compositional bias: basic and acidic residues.

It belongs to the heat shock protein 70 family.

Functionally, acts as a chaperone. In Buchnera aphidicola subsp. Schizaphis graminum (strain Sg), this protein is Chaperone protein DnaK.